The sequence spans 398 residues: Streptopain (398 aa).

Positions 1 to 27 (MNKKKLGVRLLSLLALGGFVLANPVFA) are cleaved as a signal peptide. A propeptide spanning residues 28–145 (DQNFARNEKE…TTYAGTAEIK (118 aa)) is cleaved from the precursor. Catalysis depends on C192, which acts as the Nucleophile. Residue C192 is modified to Cysteine methyl disulfide; in zymogen form. S282 and G339 together coordinate a protein. H340 serves as the catalytic Proton acceptor. The segment at 368-390 (RLDALNPSALGTGGGAGGFNGYQ) is C-terminal active site loop.

This sequence belongs to the peptidase C10 family. Monomer. The mature protease is derived from the precursor sequence by cleavage, either in cis via an autocatalytic mechanism, or in trans by mature SpeB or host proteases (trypsin, plasmin or subtilisin). Maturation can involve a number of protein cleavage intermediates. Mature SpeB probably plays the most important role in protein maturation in physiological conditions. Post-translationally, methylthiolation at Cys-192 of the inactive zymogen form is probably involved in the mechanism of secretion of the proteinase into the culture fluid.

It localises to the secreted. The protein resides in the host extracellular space. It is found in the host cytoplasm. The catalysed reaction is Preferential cleavage with hydrophobic residues at P2, P1 and P1'.. With respect to regulation, synthesized as an inactive zymogen to protect the intracellular components of the bacteria from proteolytic activity during protein production. Once secreted into the extracellular milieu, cleaved into the active protease: maturation can be mediated in cis by autocatalytic cleavage, or in trans by mature SpeB or host proteases. Protease activity is strongly inhibited by zinc and copper, which prevent its maturation into an active protease: inhibition by metal ions may be required to prevent proteolysis of streptococcal proteins. Functionally, cysteine protease that acts as a key streptococcal virulence factor by cleaving host proteins involved in immune response. Triggers inflammation by mediating cleavage of host proteins, which can both promote host pathogenesis by triggering sterile inflammation and/or restrict streptococcal infection, depending on host immune statue and infection site. Cleaves host gasdermin-A (GSDMA) in epithelial cells, promoting GSDMA activation and formation of gasdermin pores, triggering pyroptosis. Pyroptosis triggers the elimination of the infected skin cell, depriving the pathogen of its protective niche, while inducing an inflammatory response. This ultimately prevents bacterial penetration of the epithelial barrier and a subsequent systemic dissemination of the pathogen. Also mediates cleavage of the cytokine precursor interleukin-1 beta (IL1B) to its mature form, resulting in inflammation and septic shock. SpeB-mediated maturation of IL1B plays a dual role depending on infection site: while IL1B inflammatory response prevents bacterial growth during invasive skin infections, it promotes streptococcal infection of the nasopharynx by disrupting colonization resistance mediated by the microbiota. Inhibits host autophagy be catalyzing cleavage and inactivation of key autophagy factors, such as CALCOCO2, NBR1 and SQSTM1. Cleaves and inhibits a number of complement factors, such as C2, C3-beta chain of C3, C4, C5 or SERPING1, thereby promoting evasion of host immunity. May also impair adaptive immunity by catalyzing cleavage and degradation of host immunoglobulins to promote immune system evasion; the relevance of this activity is however unsure in vivo. Catalyzes maturation and release of the peptide hormone bradykinin from the precursor Kininogen-1 (KNG1) to produce hypotension during septic shock. Also involved in bacterial translocation across the host epithelial barrier by mediating cleavage and degradation of host epithelial junction proteins, such as CDH1 and OCLN. Additionally, has been involved in degradation of fibronectin and vitronectin, two host extracellular matrix proteins involved in tissue integrity. Also able to catalyze cleavage and degradation of streptococcal proteins, such as C5a peptidase, EndoS or SmeZ. Degradation of streptococcal proteins is however strictly regulated to preserve integrity of other virulence factors. The protein is Streptopain of Streptococcus pyogenes serotype M1.